A 312-amino-acid polypeptide reads, in one-letter code: Ribonuclease Z (312 aa).

Zn(2+) contacts are provided by His-63, His-65, Asp-67, His-68, His-140, Asp-211, and His-269. Asp-67 serves as the catalytic Proton acceptor.

It belongs to the RNase Z family. As to quaternary structure, homodimer. The cofactor is Zn(2+).

It catalyses the reaction Endonucleolytic cleavage of RNA, removing extra 3' nucleotides from tRNA precursor, generating 3' termini of tRNAs. A 3'-hydroxy group is left at the tRNA terminus and a 5'-phosphoryl group is left at the trailer molecule.. Functionally, zinc phosphodiesterase, which displays some tRNA 3'-processing endonuclease activity. Probably involved in tRNA maturation, by removing a 3'-trailer from precursor tRNA. This is Ribonuclease Z from Shouchella clausii (strain KSM-K16) (Alkalihalobacillus clausii).